Here is a 747-residue protein sequence, read N- to C-terminus: MDIPNPPTSKCITYWKRKVKSEYMRLRQLKRLQANMGAKALYVANFAKVQEKTQILNEEWKKLRVQPVQLMKPVSGHPFLKKCTIESIFPGFASQHMLMRSLNTVALVPIMYSWSPLQQNFMVEDETVLCNIPYMGDEVKEEDETFIEELINNYDGKVHGEEEMIPGSVLISDAVFLELVDALNQYSDEDEEGHNDTSDGKQDDSKEDLPVTRKRKRHAIEGSKKSSKKQFPNDMIFSAIASMFPENGVPDDMKERYRELTEMSDPNALPPQCTPNIDGPNAKSVQREQSLHSFHTLFCRRCFKYDCFLHPFHATPNVYKRKNKEIKIEPEPCGTDCFLLLEGAKEYAMLHNPRSKCSGRRRRRHHVVNASCSNTSASAVAETKEGDSDRDTGNDWASSSSEANSRCQTPTKQKASPAPPQLCVVEAPSEPVEWTGAEESLFRVFHGTYFNNFCSIARLLGTKTCKQVFQFAVKESLILKLPTDELMNPSQKKKRKHRLWAAHCRKIQLKKDNSSTQVYNYQPCDHPDRPCDSTCPCIMTQNFCEKFCQCNPDCQNRFPGCRCKTQCNTKQCPCYLAVRECDPDLCLTCGASEHWDCKVVSCKNCSIQRGLKKHLLLAPSDVAGWGTFIKESVQKNEFISEYCGELISQDEADRRGKVYDKYMSSFLFNLNNDFVVDATRKGNKIRFANHSVNPNCYAKVVMVNGDHRIGIFAKRAIQAGEELFFDYRYSQADALKYVGIERETDVL.

The segment at 186–229 is disordered; sequence YSDEDEEGHNDTSDGKQDDSKEDLPVTRKRKRHAIEGSKKSSKK. Over residues 194–211 the composition is skewed to basic and acidic residues; the sequence is HNDTSDGKQDDSKEDLPV. Lysine 327 participates in a covalent cross-link: Glycyl lysine isopeptide (Lys-Gly) (interchain with G-Cter in SUMO2). The disordered stretch occupies residues 375–421; it reads TSASAVAETKEGDSDRDTGNDWASSSSEANSRCQTPTKQKASPAPPQ. The segment covering 382–393 has biased composition (basic and acidic residues); sequence ETKEGDSDRDTG. The span at 395-414 shows a compositional bias: polar residues; the sequence is DWASSSSEANSRCQTPTKQK. Positions 504–606 constitute a CXC domain; the sequence is CRKIQLKKDN…CKVVSCKNCS (103 aa). Positions 613–728 constitute an SET domain; the sequence is KHLLLAPSDV…AGEELFFDYR (116 aa).

It belongs to the class V-like SAM-binding methyltransferase superfamily. Histone-lysine methyltransferase family. EZ subfamily. Component of the PRC2/EED-EZH1 complex, which includes EED, EZH1, SUZ12, RBBP4 and AEBP2. The PRC2/EED-EZH1 is less abundant than the PRC2/EED-EZH2 complex, has weak methyltransferase activity and compacts chromatin in the absence of the methyltransferase cofactor S-adenosyl-L-methionine (SAM). Interacts with EZHIP; the interaction blocks EZH1 methyltransferase activity.

The protein resides in the nucleus. It carries out the reaction L-lysyl(27)-[histone H3] + 3 S-adenosyl-L-methionine = N(6),N(6),N(6)-trimethyl-L-lysyl(27)-[histone H3] + 3 S-adenosyl-L-homocysteine + 3 H(+). Its function is as follows. Polycomb group (PcG) protein. Catalytic subunit of the PRC2/EED-EZH1 complex, which methylates 'Lys-27' of histone H3, leading to transcriptional repression of the affected target gene. Able to mono-, di- and trimethylate 'Lys-27' of histone H3 to form H3K27me1, H3K27me2 and H3K27me3, respectively. Required for embryonic stem cell derivation and self-renewal, suggesting that it is involved in safeguarding embryonic stem cell identity. Compared to EZH2-containing complexes, it is less abundant in embryonic stem cells, has weak methyltransferase activity and plays a less critical role in forming H3K27me3, which is required for embryonic stem cell identity and proper differentiation. The protein is Histone-lysine N-methyltransferase EZH1 (EZH1) of Bos taurus (Bovine).